The primary structure comprises 288 residues: Pyridoxal kinase PdxY (288 aa).

Residues S12 and 47-48 (TQ) each bind substrate. ATP contacts are provided by residues D114, E151, K184, and 211–214 (RPLL). D225 is a substrate binding site.

Belongs to the pyridoxine kinase family. PdxY subfamily. Homodimer. It depends on Mg(2+) as a cofactor.

The catalysed reaction is pyridoxal + ATP = pyridoxal 5'-phosphate + ADP + H(+). It participates in cofactor metabolism; pyridoxal 5'-phosphate salvage; pyridoxal 5'-phosphate from pyridoxal: step 1/1. Its function is as follows. Pyridoxal kinase involved in the salvage pathway of pyridoxal 5'-phosphate (PLP). Catalyzes the phosphorylation of pyridoxal to PLP. This chain is Pyridoxal kinase PdxY, found in Pseudomonas aeruginosa (strain UCBPP-PA14).